The sequence spans 436 residues: 3-ketoacyl-CoA thiolase (436 aa).

Residue Cys-99 is the Acyl-thioester intermediate of the active site. Catalysis depends on proton acceptor residues His-392 and Cys-422.

It belongs to the thiolase-like superfamily. Thiolase family. As to quaternary structure, heterotetramer of two alpha chains (FadJ) and two beta chains (FadI).

It is found in the cytoplasm. It catalyses the reaction an acyl-CoA + acetyl-CoA = a 3-oxoacyl-CoA + CoA. Its pathway is lipid metabolism; fatty acid beta-oxidation. Catalyzes the final step of fatty acid oxidation in which acetyl-CoA is released and the CoA ester of a fatty acid two carbons shorter is formed. This Salmonella schwarzengrund (strain CVM19633) protein is 3-ketoacyl-CoA thiolase.